A 692-amino-acid polypeptide reads, in one-letter code: Elongation factor G (692 aa).

The tr-type G domain occupies 8-282 (EKTRNIGIMA…GVVDYLPSPV (275 aa)). GTP is bound by residues 17-24 (AHIDAGKT), 81-85 (DTPGH), and 135-138 (NKMD).

It belongs to the TRAFAC class translation factor GTPase superfamily. Classic translation factor GTPase family. EF-G/EF-2 subfamily.

The protein resides in the cytoplasm. In terms of biological role, catalyzes the GTP-dependent ribosomal translocation step during translation elongation. During this step, the ribosome changes from the pre-translocational (PRE) to the post-translocational (POST) state as the newly formed A-site-bound peptidyl-tRNA and P-site-bound deacylated tRNA move to the P and E sites, respectively. Catalyzes the coordinated movement of the two tRNA molecules, the mRNA and conformational changes in the ribosome. This Geobacillus kaustophilus (strain HTA426) protein is Elongation factor G.